Here is a 447-residue protein sequence, read N- to C-terminus: NAD-dependent histone deacetylase HST3 (447 aa).

Residues 1–21 (MTSVSPSPPASRSGSMCSDLP) form a disordered region. In terms of domain architecture, Deacetylase sirtuin-type spans 35 to 363 (LDADDEVLRR…IKKLRQLKRE (329 aa)). NAD(+) contacts are provided by residues 60-79 (GAGI…DGLY) and 151-154 (QNID). His-187 functions as the Proton acceptor in the catalytic mechanism. Zn(2+)-binding residues include Cys-195, Cys-198, Cys-220, and Cys-223. NAD(+) is bound by residues 282 to 284 (GTS), 312 to 314 (NKT), and Cys-333. Residues 365–375 (SDLRKQMKAQK) are compositionally biased toward basic and acidic residues. Disordered regions lie at residues 365–393 (SDLR…QGID) and 411–447 (KRKI…NQAS).

The protein belongs to the sirtuin family. Class I subfamily. Zn(2+) is required as a cofactor.

It localises to the cytoplasm. The protein localises to the nucleus. It catalyses the reaction N(6)-acetyl-L-lysyl-[protein] + NAD(+) + H2O = 2''-O-acetyl-ADP-D-ribose + nicotinamide + L-lysyl-[protein]. Functionally, NAD-dependent histone deacetylase, which contributes together with HST4 to histone H3 'Lys-56' deacetylation, regulation of telomeric silencing, proper cell cycle progression, DNA damage control, DNA recombination, and genomic maintenance. The chain is NAD-dependent histone deacetylase HST3 (HST3) from Saccharomyces cerevisiae (strain ATCC 204508 / S288c) (Baker's yeast).